The sequence spans 1192 residues: Integrator complex subunit 2 (1192 aa).

A helical transmembrane segment spans residues 420–436; sequence FVSLSFCMLLAFSTLVS.

This sequence belongs to the Integrator subunit 2 family. As to quaternary structure, component of the Integrator complex, composed of core subunits INTS1, INTS2, INTS3, INTS4, INTS5, INTS6, INTS7, INTS8, INTS9/RC74, INTS10, INTS11/CPSF3L, INTS12, INTS13, INTS14 and INTS15. The core complex associates with protein phosphatase 2A subunits PPP2CA and PPP2R1A, to form the Integrator-PP2A (INTAC) complex.

It is found in the nucleus. The protein localises to the nucleus membrane. The protein resides in the cytoplasm. In terms of biological role, component of the integrator complex, a multiprotein complex that terminates RNA polymerase II (Pol II) transcription in the promoter-proximal region of genes. The integrator complex provides a quality checkpoint during transcription elongation by driving premature transcription termination of transcripts that are unfavorably configured for transcriptional elongation: the complex terminates transcription by (1) catalyzing dephosphorylation of the C-terminal domain (CTD) of Pol II subunit POLR2A/RPB1 and SUPT5H/SPT5, (2) degrading the exiting nascent RNA transcript via endonuclease activity and (3) promoting the release of Pol II from bound DNA. The integrator complex is also involved in terminating the synthesis of non-coding Pol II transcripts, such as enhancer RNAs (eRNAs), small nuclear RNAs (snRNAs), telomerase RNAs and long non-coding RNAs (lncRNAs). This is Integrator complex subunit 2 (INTS2) from Gallus gallus (Chicken).